A 147-amino-acid polypeptide reads, in one-letter code: Bis(5'-nucleosyl)-tetraphosphatase [asymmetrical] (147 aa).

Position 2 is an N-acetylalanine (Ala2). Positions 2–139 (ALRACGLIIF…EMKATLQEGH (138 aa)) constitute a Nudix hydrolase domain. The short motif at 43-64 (GHVDPGENDLETALRETREETG) is the Nudix box element.

This sequence belongs to the Nudix hydrolase family. A divalent metal cation is required as a cofactor.

The enzyme catalyses P(1),P(4)-bis(5'-guanosyl) tetraphosphate + H2O = GMP + GTP + 2 H(+). It catalyses the reaction a 5'-end CoA-ribonucleoside in mRNA + H2O = a 5'-end phospho-adenosine-phospho-ribonucleoside in mRNA + (R)-4'-phosphopantetheine + 2 H(+). The catalysed reaction is a 5'-end FAD-phospho-ribonucleoside in mRNA + H2O = a 5'-end phospho-adenosine-phospho-ribonucleoside in mRNA + FMN + 2 H(+). Its function is as follows. Catalyzes the asymmetric hydrolysis of diadenosine 5',5'''-P1,P4-tetraphosphate (Ap4A) to yield AMP and ATP. Exhibits decapping activity towards FAD-capped RNAs and dpCoA-capped RNAs in vitro. The polypeptide is Bis(5'-nucleosyl)-tetraphosphatase [asymmetrical] (Nudt2) (Mus musculus (Mouse)).